The following is a 1619-amino-acid chain: MAAVPTIDLTLADSDNEDIFHSFSSSTSVDKIDIRKENGKLRMAGLEVAQSNDDAARQAFHVFKTNISNNETFDTILSKSKTITDSTFNNEKSSNEVKQQQVLKEETMGSSNDEKKTQESSPSAEMIKLFYENDDVPLSDSFKQKEEGKRINQDEQVKENICGISSSYVSKDYDGVEDDFEPNTCQDSNLDFQEEKLNLNNKPSQQQFSDPETKDNSLKSENKDQIKGVTTTSYRDLPIESSAFQDSETQNNSKNTIPNIVNEKRTPALPSNLSSVESSLKNETAKVEGKTTVRLPGLQNNVALLEQEQSELFKHFSEQPVDISDFGRKIKRKHSGDFADNKILKRPILPSKNMDHTTHNSHDSEQKNSSIIILSDEDESGAGINDIESPLKVSEPNTADALRSSVPEVISLLDLPNIDLNNSVIKEASGSNSIPTSETDAQSSSSSVLQGTIMTEQATQSSQHECNSSLDTLKKNHQKLLKDLNSRESELRNALSCCKTNSEILRRKLSRREKEVSDAEKHWQLLLTSMARGGRTISSTQQILVDEAENQLNKLKEKRQLTKSKLDSINLKMYNYNEQWKSFVHSKNINLQKSLAALERSARDSKASATVNKRNECLAEKEKLDQMLKEGTLSFSTYKQLTGEIQQKLNDLKLGDQRTTDINSVLPIVRQPLAKRDLFIKSIDTAKDLLAKNTSRTEMTKRILYRHLDNLVSYKNFFEDGRSLIDINRRHVAHESAQILFTNGVKMPIVFETLQDYGIKFSNPAIVNPDRRAQYFKSIEVARDLISKSTRSEDAKRKITRFLNIIEEFRKDIDTGFPPTPLKREGVGKAVVGLRQQGLKMDRLYENLRRYKIPITSEELLQQSYLFPVNADQRPPSNWNIVENTEDTSSTANDLSMQDEFHISNMHAAEDQEQIRALLENVKQSESIIDGEALTPEDMTVNLLKHQRLGLHWLLQVENSAKKGGLLADDMGLGKTIQAIALMLANRSEESKCKTNLIVAPVSVLRVWKGELETKVKKRAKFTTFIFGGSGNGKVKHWRDLARYDAVLVSYQTLANEFKKHWPKKLDGEQNQLPAVPHIQALNRLKTSNEYYSPFFCNDSTFYRILLDEGQNIKNKNTRASKACCTINGMYRWVLSGTPIQNSMDELYSLIRFLRIPPYHKEQRFKLDIGRFFQRNKQYQYDNEDRKNALRKVRVLLNAIMLRRSKADKIDGKPLLELPPKIVEVDESRLKGEELKFYTALESKNQALAKKLLNNSTRGSYSSVLTLLLRLRQACCHSELVVMGEKKAEGTKVANGKSFEDDWLRLYYKITHMSGEAQAQVITSMNSMTCFWCMEQLEPEAMSVLTGCGHLICDTCIEPFIEESSMLPQAKKTKGGAFAIPCKDCQRLTNEKDIVSHKLYDQVINQGFTEEDLHAEYLSEMEKQKIQQKNVYVPNFESLEPSTKIEQCIQVIQRVFDESATEKIIIFSQFTTFFEILEHFLKNKLNFPYLKYIGSMNAQRRSDVINEFYRDPEKRILLISMKAGNSGLTLTCANHVVIVDPFWNPYVEEQAQDRCYRISQTKKVQVHKLFIKDSVEDRISELQKRKKEMVDSAMDPGKIKEVNSLGRRELGFLFGLNAL.

Positions 7–10 match the SUMO interacting motif; type a 1 motif; that stretch reads IDLT. The span at 86–102 shows a compositional bias: polar residues; that stretch reads STFNNEKSSNEVKQQQV. 4 disordered regions span residues 86-123, 200-279, 347-371, and 429-450; these read STFN…SSPS, NNKP…VESS, PILP…NSSI, and SGSN…SVLQ. The segment covering 103–118 has biased composition (basic and acidic residues); the sequence is LKEETMGSSNDEKKTQ. S121 carries the post-translational modification Phosphoserine. The segment covering 200–210 has biased composition (polar residues); it reads NNKPSQQQFSD. The segment covering 211 to 226 has biased composition (basic and acidic residues); it reads PETKDNSLKSENKDQI. Composition is skewed to polar residues over residues 242 to 259 and 269 to 279; these read SAFQ…TIPN and LPSNLSSVESS. Residues 353–366 show a composition bias toward basic and acidic residues; it reads NMDHTTHNSHDSEQ. An SUMO interacting motif; type b 1 motif is present at residues 371 to 378; that stretch reads IIILSDED. The SUMO interacting motif; type a 2 motif lies at 470-473; the sequence is LDTL. An SUMO interacting motif; type b 2 motif is present at residues 543–550; the sequence is ILVDEAEN. The Helicase ATP-binding domain occupies 956–1157; it reads QVENSAKKGG…YSLIRFLRIP (202 aa). 969–976 contacts ATP; the sequence is DDMGLGKT. The RING-type zinc finger occupies 1330–1386; that stretch reads CFWCMEQLEPEAMSVLTGCGHLICDTCIEPFIEESSMLPQAKKTKGGAFAIPCKDCQ. In terms of domain architecture, Helicase C-terminal spans 1447–1606; sequence QCIQVIQRVF…GKIKEVNSLG (160 aa).

This sequence belongs to the SNF2/RAD54 helicase family. Interacts with CDC3, CDC11, EBP2, SIR4, UBC4 and SUMO/SMT3.

The protein localises to the nucleus. ATP-dependent helicase involved mating type switching and in silencing interference through its interaction with the silencing regulator SIR4. Cooperates with UBC4 and UBC5 to mediate ubiquitination of SUMO conjugates. The polypeptide is ATP-dependent helicase ULS1 (ULS1) (Saccharomyces cerevisiae (strain ATCC 204508 / S288c) (Baker's yeast)).